The following is a 238-amino-acid chain: Gem-associated protein 8 (238 aa).

Residues 66-127 (AGHPWDSQGQ…LESDSDDEVE (62 aa)) form a disordered region. Polar residues-rich tracts occupy residues 72–82 (SQGQHMAQQES) and 96–108 (LRNSSRTQASTRG). Residues 113-127 (CEEEELESDSDDEVE) are compositionally biased toward acidic residues. Serine 122 carries the post-translational modification Phosphoserine. A coiled-coil region spans residues 131-164 (SNMEITEELRQYFAQTERHREERRRQQQLDAERL).

In terms of assembly, part of the core SMN complex that contains SMN1, GEMIN2/SIP1, DDX20/GEMIN3, GEMIN4, GEMIN5, GEMIN6, GEMIN7, GEMIN8 and STRAP/UNRIP. Part of the SMN-Sm complex that contains SMN1, GEMIN2/SIP1, DDX20/GEMIN3, GEMIN4, GEMIN5, GEMIN6, GEMIN7, GEMIN8, STRAP/UNRIP and the Sm proteins SNRPB, SNRPD1, SNRPD2, SNRPD3, SNRPE, SNRPF and SNRPG. Interacts with GEMIN6; the interaction is direct. Interacts with GEMIN7; the interaction is direct. Interacts with SMN1; the interaction is direct. Interacts with GEMIN4; the interaction is direct. Widely expressed in embryonic tissues (at protein level).

Its subcellular location is the nucleus. The protein localises to the gem. It is found in the cytoplasm. The SMN complex catalyzes the assembly of small nuclear ribonucleoproteins (snRNPs), the building blocks of the spliceosome, and thereby plays an important role in the splicing of cellular pre-mRNAs. Most spliceosomal snRNPs contain a common set of Sm proteins SNRPB, SNRPD1, SNRPD2, SNRPD3, SNRPE, SNRPF and SNRPG that assemble in a heptameric protein ring on the Sm site of the small nuclear RNA to form the core snRNP (Sm core). In the cytosol, the Sm proteins SNRPD1, SNRPD2, SNRPE, SNRPF and SNRPG are trapped in an inactive 6S pICln-Sm complex by the chaperone CLNS1A that controls the assembly of the core snRNP. To assemble core snRNPs, the SMN complex accepts the trapped 5Sm proteins from CLNS1A forming an intermediate. Binding of snRNA inside 5Sm triggers eviction of the SMN complex, thereby allowing binding of SNRPD3 and SNRPB to complete assembly of the core snRNP. This Mus musculus (Mouse) protein is Gem-associated protein 8 (Gemin8).